The sequence spans 316 residues: ATP synthase gamma chain (316 aa).

Belongs to the ATPase gamma chain family. F-type ATPases have 2 components, CF(1) - the catalytic core - and CF(0) - the membrane proton channel. CF(1) has five subunits: alpha(3), beta(3), gamma(1), delta(1), epsilon(1). CF(0) has three main subunits: a, b and c.

It is found in the cellular thylakoid membrane. Produces ATP from ADP in the presence of a proton gradient across the membrane. The gamma chain is believed to be important in regulating ATPase activity and the flow of protons through the CF(0) complex. This is ATP synthase gamma chain from Prochlorococcus marinus (strain MIT 9515).